The sequence spans 314 residues: MSFASDMKNELTRIEVDESNAKAELSALIRMNGALSLSNQQFVINVQTENATTARRIYSLIKRIFNVEVEILVRKKMKLKKNNIYICRTKMLAKEILNDLGILKKGVFTHDIDPDMIKDDEMKRSYLRGAFLAGGSVNNPETSSYHLEIFSQYEDHSEGLTKLMNSYELNAKHLERKKGSIAYLKEAEKISDFLSLIGGYQALLKFEDVRIVRDMRNSVNRLVNCETANLNKTVSAAMKQVESIQLIDEEIGLENLPDRLREVAKLRVEHQEISLKELGEMVSTGPISKSGMNHRLRKLNELADKIRNGEQIEL.

Positions 274 to 308 (SLKELGEMVSTGPISKSGMNHRLRKLNELADKIRN) form a DNA-binding region, H-T-H motif.

The protein belongs to the WhiA family.

Involved in cell division and chromosome segregation. The polypeptide is Probable cell division protein WhiA (Staphylococcus epidermidis (strain ATCC 35984 / DSM 28319 / BCRC 17069 / CCUG 31568 / BM 3577 / RP62A)).